We begin with the raw amino-acid sequence, 148 residues long: MKQFEIVTEPIQTEQYREFTINEYQGAVVVFTGHVREWTKGVKTEYLEYEAYIPMAEKKLAQIGDEINEKWPGTITSIVHRIGPLQISDIAVLIAVSSPHRKDAYRANEYAIERIKEIVPIWKKEIWEDGSKWQGHQKGNYEEAKREE.

Substrate is bound by residues H34 to R36, T44, H100 to R101, K116, and K123 to E125.

Belongs to the MoaE family. As to quaternary structure, heterotetramer of 2 MoaD subunits and 2 MoaE subunits. Also stable as homodimer. The enzyme changes between these two forms during catalysis.

The enzyme catalyses 2 [molybdopterin-synthase sulfur-carrier protein]-C-terminal-Gly-aminoethanethioate + cyclic pyranopterin phosphate + H2O = molybdopterin + 2 [molybdopterin-synthase sulfur-carrier protein]-C-terminal Gly-Gly + 2 H(+). The protein operates within cofactor biosynthesis; molybdopterin biosynthesis. Functionally, converts molybdopterin precursor Z into molybdopterin. This requires the incorporation of two sulfur atoms into precursor Z to generate a dithiolene group. The sulfur is provided by MoaD. The sequence is that of Molybdopterin synthase catalytic subunit (moaE) from Staphylococcus aureus (strain COL).